A 257-amino-acid polypeptide reads, in one-letter code: MRAYVITIGNEILKGRTINTNAAHIGRVLTYAGYDVIRMVVVPDEIDEIVWAFRDGLSRADLIVSTGGLGPTFDDKTVEALAKALNLELELNQEAFSMVKSKYDRLGVELTKERIKMAYMPKGAKPLPNPVGTAPGVYIEYAGKRILTLPGVPAEMEAILDEALPQLRVPGRYYYEESVVVRGIMESALAPVVNEVMRLNAGLVYVKSHPKGIEIDKPVVEVEVSASGSSEEEVRGRVKEAIRQLVSRAKSINPQCC.

Belongs to the CinA family.

This chain is Protein Cmaq_1209, found in Caldivirga maquilingensis (strain ATCC 700844 / DSM 13496 / JCM 10307 / IC-167).